Reading from the N-terminus, the 67-residue chain is MAVPKRKMSRSNTRARRSQWKAEAPTLVKTIENGKVVYSMPHRARVVEDAAGTPLYMEYKGRKVADV.

Positions 1–19 (MAVPKRKMSRSNTRARRSQ) are enriched in basic residues. The tract at residues 1-21 (MAVPKRKMSRSNTRARRSQWK) is disordered.

The protein belongs to the bacterial ribosomal protein bL32 family.

This Clavibacter michiganensis subsp. michiganensis (strain NCPPB 382) protein is Large ribosomal subunit protein bL32.